A 948-amino-acid chain; its full sequence is UvrABC system protein A (948 aa).

Residue 33–40 coordinates ATP; the sequence is GLSGSGKS. A C4-type zinc finger spans residues 252–279; sequence CPICGFSIGELEPRMFSFNSPFGACPTC. ABC transporter domains follow at residues 309 to 587 and 607 to 935; these read WIPT…KKSL and ASDR…KYLK. An ATP-binding site is contributed by 639–646; sequence GVSGSGKS. A C4-type zinc finger spans residues 738–764; sequence CEACKGDGIIKIEMHFLPDVYVPCEVC.

The protein belongs to the ABC transporter superfamily. UvrA family. Forms a heterotetramer with UvrB during the search for lesions.

The protein localises to the cytoplasm. Its function is as follows. The UvrABC repair system catalyzes the recognition and processing of DNA lesions. UvrA is an ATPase and a DNA-binding protein. A damage recognition complex composed of 2 UvrA and 2 UvrB subunits scans DNA for abnormalities. When the presence of a lesion has been verified by UvrB, the UvrA molecules dissociate. This chain is UvrABC system protein A, found in Staphylococcus aureus (strain MSSA476).